A 662-amino-acid polypeptide reads, in one-letter code: UvrABC system protein B (662 aa).

One can recognise a Helicase ATP-binding domain in the interval 25–414; that stretch reads AGLNSKKRSQ…GTVVELIIRP (390 aa). 38–45 lines the ATP pocket; that stretch reads GITGSGKT. A Beta-hairpin motif is present at residues 91-114; sequence YYDYYQPEAYIVRTDTFIEKDSSI. The Helicase C-terminal domain occupies 430–592; the sequence is QVEDLISEIQ…IIPKTINSAI (163 aa). Positions 622–657 constitute a UVR domain; that stretch reads KSYMDKLKKEMFKAASNLEFEQAAKLRNQLKTLEKA.

This sequence belongs to the UvrB family. As to quaternary structure, forms a heterotetramer with UvrA during the search for lesions. Interacts with UvrC in an incision complex.

The protein resides in the cytoplasm. Its function is as follows. The UvrABC repair system catalyzes the recognition and processing of DNA lesions. A damage recognition complex composed of 2 UvrA and 2 UvrB subunits scans DNA for abnormalities. Upon binding of the UvrA(2)B(2) complex to a putative damaged site, the DNA wraps around one UvrB monomer. DNA wrap is dependent on ATP binding by UvrB and probably causes local melting of the DNA helix, facilitating insertion of UvrB beta-hairpin between the DNA strands. Then UvrB probes one DNA strand for the presence of a lesion. If a lesion is found the UvrA subunits dissociate and the UvrB-DNA preincision complex is formed. This complex is subsequently bound by UvrC and the second UvrB is released. If no lesion is found, the DNA wraps around the other UvrB subunit that will check the other stand for damage. This Rickettsia typhi (strain ATCC VR-144 / Wilmington) protein is UvrABC system protein B.